The following is a 28-amino-acid chain: Cruzioseptin-10 (28 aa).

Expressed by the skin glands.

It localises to the secreted. In terms of biological role, has antimicrobial activity. The chain is Cruzioseptin-10 from Cruziohyla calcarifer (Splendid leaf frog).